Reading from the N-terminus, the 101-residue chain is Integration host factor subunit alpha (101 aa).

The tract at residues 49–70 is disordered; the sequence is FGNFQLRDKPQRPGRNPKTGEE.

The protein belongs to the bacterial histone-like protein family. In terms of assembly, heterodimer of an alpha and a beta chain.

In terms of biological role, this protein is one of the two subunits of integration host factor, a specific DNA-binding protein that functions in genetic recombination as well as in transcriptional and translational control. The protein is Integration host factor subunit alpha of Nitrosospira multiformis (strain ATCC 25196 / NCIMB 11849 / C 71).